The sequence spans 276 residues: Formamidopyrimidine-DNA glycosylase (276 aa).

The active-site Schiff-base intermediate with DNA is the proline 2. Catalysis depends on glutamate 3, which acts as the Proton donor. The active-site Proton donor; for beta-elimination activity is lysine 59. DNA is bound by residues histidine 93, arginine 112, and arginine 155. Residues 240-274 (QVYNREGKPCPRCGDKIAKKKVGGRSSYYCPTCQK) form an FPG-type zinc finger. Arginine 264 functions as the Proton donor; for delta-elimination activity in the catalytic mechanism.

This sequence belongs to the FPG family. Monomer. Zn(2+) is required as a cofactor.

It catalyses the reaction Hydrolysis of DNA containing ring-opened 7-methylguanine residues, releasing 2,6-diamino-4-hydroxy-5-(N-methyl)formamidopyrimidine.. It carries out the reaction 2'-deoxyribonucleotide-(2'-deoxyribose 5'-phosphate)-2'-deoxyribonucleotide-DNA = a 3'-end 2'-deoxyribonucleotide-(2,3-dehydro-2,3-deoxyribose 5'-phosphate)-DNA + a 5'-end 5'-phospho-2'-deoxyribonucleoside-DNA + H(+). Involved in base excision repair of DNA damaged by oxidation or by mutagenic agents. Acts as a DNA glycosylase that recognizes and removes damaged bases. Has a preference for oxidized purines, such as 7,8-dihydro-8-oxoguanine (8-oxoG). Has AP (apurinic/apyrimidinic) lyase activity and introduces nicks in the DNA strand. Cleaves the DNA backbone by beta-delta elimination to generate a single-strand break at the site of the removed base with both 3'- and 5'-phosphates. This Pelotomaculum thermopropionicum (strain DSM 13744 / JCM 10971 / SI) protein is Formamidopyrimidine-DNA glycosylase.